The chain runs to 706 residues: MMNPQRNKFVRFNGNDDEFSTKTTRPSVSSVMKTVRRSFEKGSEKIRTFKRPLSVHSNKNKENNKKKKILRVMNPNDSYLQSWNKIFLLLSVVALAFDPLFFYIPYVKPERFCLNLDKKLQTIACVFRTFIDAFYVVHMLFQFHTGFITPSSSGFGRGELNEKHKDIALRYLGSYFLIDLLSILPIPQVVVLAIVPRMRRPASLVAKELLKWVIFCQYVPRIARIYPLFKEVTRTSGLVTETAWAGAALNLFLYMLASHVFGSFWYLISIERKDRCWREACAKIQNCTHAYLYCSPTGEDNRLFLNGSCPLIDPEEITNSTVFNFGIFADALQSGVVESRDFPKKFFYCFWWGLRNLSALGQNLKTSAFEGEIIFAIVICISGLVLFALLIGNMQKYLQSTTVRVEEMRVKRRDAEQWMSHRMLPDDLRKRIRKYEQYKWQETKGVEEEALLSSLPKDLRKDIKRHLCLKLLKKVPWFQAMDDRLLDALCARLKTVLYTEKSYIVREGEPVEDMLFIMRGNLISTTTYGGRTGFFNSVDLVAGDFCGDLLTWALDPLSSQFPISSRTVQALTEVEGFLLSADDLKFVATQYRRLHSKQLRHMFRFYSVQWQTWAACFIQAAWKRHCRRKLSKALREEEGKLHNTLQNDDSGGNKLNLGAAIYASRFASHALRNLRANAAARNSRFPHMLTLLPQKPADPEFPMDET.

Residues 1 to 85 (MMNPQRNKFV…NDSYLQSWNK (85 aa)) lie on the Cytoplasmic side of the membrane. Residues 86-106 (IFLLLSVVALAFDPLFFYIPY) form a helical membrane-spanning segment. Residues 107–119 (VKPERFCLNLDKK) are Extracellular-facing. The chain crosses the membrane as a helical span at residues 120–140 (LQTIACVFRTFIDAFYVVHML). The Cytoplasmic portion of the chain corresponds to 141 to 174 (FQFHTGFITPSSSGFGRGELNEKHKDIALRYLGS). A helical membrane pass occupies residues 175–195 (YFLIDLLSILPIPQVVVLAIV). Topologically, residues 196–208 (PRMRRPASLVAKE) are extracellular. Residues 209 to 229 (LLKWVIFCQYVPRIARIYPLF) traverse the membrane as a helical segment. At 230-247 (KEVTRTSGLVTETAWAGA) the chain is on the cytoplasmic side. Residues 248–268 (ALNLFLYMLASHVFGSFWYLI) traverse the membrane as a helical segment. The Extracellular segment spans residues 269 to 371 (SIERKDRCWR…QNLKTSAFEG (103 aa)). A helical transmembrane segment spans residues 372-392 (EIIFAIVICISGLVLFALLIG). Topologically, residues 393–706 (NMQKYLQSTT…ADPEFPMDET (314 aa)) are cytoplasmic. Residues 477-600 (WFQA…KQLR) and Asp-548 each bind a nucleoside 3',5'-cyclic phosphate. Residues 591–606 (YRRLHSKQLRHMFRFY) form a calmodulin-binding region. The 30-residue stretch at 611–640 (QTWAACFIQAAWKRHCRRKLSKALREEEGK) folds into the IQ domain.

The protein belongs to the cyclic nucleotide-gated cation channel (TC 1.A.1.5) family. As to quaternary structure, homotetramer or heterotetramer.

It localises to the cell membrane. Its function is as follows. Probable cyclic nucleotide-gated ion channel. This is Probable cyclic nucleotide-gated ion channel 3 (CNGC3) from Arabidopsis thaliana (Mouse-ear cress).